The primary structure comprises 869 residues: VSVPPTSYRDRIMNALEESMIDVDAIRGSSARELVEIGKVALLNQPMDEGRIMSWLSDRFPDTQKPKGPIYSKTTIYHGTNKQKRKQRYALVQSLYKKDISAAARVVLDENDKIATKIPPVRHMFDYWKDVFATGGGSAATNINRAPPAPHMETLWDPVSLIEIKSARASNEKGAGPDGVTPRSWNALDDRYKRLLYNIFVFYGRVPSPIKGSRTVFTPKIEGGPDPGVFRPLSICSVILREFNKILARRFVSCYTYDERQTAYLPIDGVCINVSMLTAIIAEAKRLRKELHIAILDLVKAFNSVYHSALIDAITEAGCPPGVVDYIADMYNNVITEMQFEGKCELASILAGVYQGDPLSGPLFTLAYEKALRALNNEGRFDIADVRVNASAYSDDGLLLAMTVIGLQHNLDKFGETLAKIGLRINSRKSKTVSLVPSGREKKMKIVSNRRLLLKASELKPLTISDLWKYLGVVYTTSGPEVAKVSMDDDLSKLTKGPLKPQQRIHLLKTFVIPKHLNRLVLSRTTATGLCKMDLLIRKYVRRWLRLPGDVPVAFLYAPVKAGGKGIPCLKQWIPLMRFLRLNKAKRTGGDRIAAVLNCQLYASISHSCKTGPVSVGLWRSTNTGGLSAYWRRILIGMVDGKDLKSAQNHSSATSFNSIRMNDISGEDYIHYNQLRTNSIPTRKRTARGRPNKPTACRAGCDKLKRLQHDIQGCIRSQGGLVQRHDRVVDLLFDECETKGYAAEKVVHLRTSEELWKPDLVLKKNGRVVVVDAQVVQCGRLESDHRVKVSKYRDDPELADVIREKYAVQEVTFEACTLSYKGIWSKNSVEGLQKLGISNYCLFKIVTSVLRGSWLNWVRFNNVTTVVHW.

The Reverse transcriptase domain maps to 199–475 (IFVFYGRVPS…DLWKYLGVVY (277 aa)). Residues 601-869 (LYASISHSCK…FNNVTTVVHW (269 aa)) are nucleic acid-binding endonuclease.

It carries out the reaction DNA(n) + a 2'-deoxyribonucleoside 5'-triphosphate = DNA(n+1) + diphosphate. In Bradysia coprophila (Dark-winged fungus gnat), this protein is Retrovirus-related Pol polyprotein from type-1 retrotransposable element R2.